Reading from the N-terminus, the 650-residue chain is Acetyl-coenzyme A synthetase (650 aa).

CoA is bound by residues Arg-191 to Arg-194, Thr-311, and Asn-335. ATP-binding positions include Gly-387–Pro-389, Asp-411–Thr-416, Asp-500, and Arg-515. Ser-523 contributes to the CoA binding site. Arg-526 is a binding site for ATP. Val-537, His-539, and Val-542 together coordinate Mg(2+). Residue Arg-584 participates in CoA binding. Lys-609 carries the post-translational modification N6-acetyllysine.

Belongs to the ATP-dependent AMP-binding enzyme family. Mg(2+) is required as a cofactor. Acetylated. Deacetylation by the SIR2-homolog deacetylase activates the enzyme.

The catalysed reaction is acetate + ATP + CoA = acetyl-CoA + AMP + diphosphate. Catalyzes the conversion of acetate into acetyl-CoA (AcCoA), an essential intermediate at the junction of anabolic and catabolic pathways. AcsA undergoes a two-step reaction. In the first half reaction, AcsA combines acetate with ATP to form acetyl-adenylate (AcAMP) intermediate. In the second half reaction, it can then transfer the acetyl group from AcAMP to the sulfhydryl group of CoA, forming the product AcCoA. The chain is Acetyl-coenzyme A synthetase from Shewanella putrefaciens (strain CN-32 / ATCC BAA-453).